A 262-amino-acid chain; its full sequence is uncharacterized protein (262 aa).

6 helical membrane passes run 7 to 27, 58 to 78, 114 to 134, 140 to 160, 179 to 199, and 216 to 236; these read LAVAISFFVFGASVLYSLAHM, DTLGECLVLVVAVMVSWIVFG, FLAFPMSVLMVALGIITVLGG, GGFQGGALIAAAFILSVIAFG, GALGYLLLGVAGMFIGGYYLF, and IITAGIIPYLNIAVGLKVLAG.

It localises to the cell membrane. This is an uncharacterized protein from Methanocaldococcus jannaschii (strain ATCC 43067 / DSM 2661 / JAL-1 / JCM 10045 / NBRC 100440) (Methanococcus jannaschii).